We begin with the raw amino-acid sequence, 424 residues long: 3-ketoacyl-CoA thiolase A, peroxisomal (424 aa).

The transit peptide at 1 to 26 directs the protein to the peroxisome; sequence MHRLQVVLGHLAGRPESSSALQAAPC. Residues 1-26 form a PTS2-type peroxisomal targeting signal region; sequence MHRLQVVLGHLAGRPESSSALQAAPC. Cysteine 123 acts as the Acyl-thioester intermediate in catalysis. N6-acetyllysine occurs at positions 173 and 234. Catalysis depends on proton acceptor residues histidine 377 and cysteine 408.

This sequence belongs to the thiolase-like superfamily. Thiolase family. Homodimer. Interacts (via PTS2-type peroxisomal targeting signal region) with PEX7; leading to its translocation into peroxisomes. Mainly expressed in liver and intestine.

The protein localises to the peroxisome. It catalyses the reaction an acyl-CoA + acetyl-CoA = a 3-oxoacyl-CoA + CoA. The catalysed reaction is 2 acetyl-CoA = acetoacetyl-CoA + CoA. The enzyme catalyses tetradecanoyl-CoA + acetyl-CoA = 3-oxohexadecanoyl-CoA + CoA. It carries out the reaction hexanoyl-CoA + acetyl-CoA = 3-oxooctanoyl-CoA + CoA. It catalyses the reaction 3-oxohexadecanedioyl-CoA + CoA = tetradecanedioyl-CoA + acetyl-CoA. The catalysed reaction is 3-oxo-(6Z,9Z,12Z,15Z,18Z,21Z)-tetracosahexaenoyl-CoA + CoA = (4Z,7Z,10Z,13Z,16Z,19Z)-docosahexaenoyl-CoA + acetyl-CoA. Its pathway is lipid metabolism; peroxisomal fatty acid beta-oxidation. Its function is as follows. Responsible for the thiolytic cleavage of straight chain 3-keto fatty acyl-CoAs (3-oxoacyl-CoAs). Plays an important role in fatty acid peroxisomal beta-oxidation. Catalyzes the cleavage of short, medium, long, and very long straight chain 3-oxoacyl-CoAs. This chain is 3-ketoacyl-CoA thiolase A, peroxisomal, found in Mus musculus (Mouse).